Here is a 102-residue protein sequence, read N- to C-terminus: Large ribosomal subunit protein bL21 (102 aa).

This sequence belongs to the bacterial ribosomal protein bL21 family. As to quaternary structure, part of the 50S ribosomal subunit. Contacts protein L20.

Its function is as follows. This protein binds to 23S rRNA in the presence of protein L20. In Myxococcus xanthus (strain DK1622), this protein is Large ribosomal subunit protein bL21.